Consider the following 52-residue polypeptide: AANQHLCGSHLVEALYLVCGERGFFYTPNKVGIVEQCCHSPCSLYDLENYCN.

Intrachain disulfides connect C7/C38, C19/C51, and C37/C42.

This sequence belongs to the insulin family. Heterodimer of a B chain and an A chain linked by two disulfide bonds.

The protein localises to the secreted. In terms of biological role, insulin decreases blood glucose concentration. It increases cell permeability to monosaccharides, amino acids and fatty acids. It accelerates glycolysis, the pentose phosphate cycle, and glycogen synthesis in liver. This chain is Insulin (ins), found in Acipenser gueldenstaedtii (Russian sturgeon).